Here is a 283-residue protein sequence, read N- to C-terminus: Cytosolic Fe-S cluster assembly factor CFD1 (283 aa).

Residue 26 to 33 coordinates ATP; the sequence is GKGGVGKS. [4Fe-4S] cluster contacts are provided by cysteine 202 and cysteine 205.

This sequence belongs to the Mrp/NBP35 ATP-binding proteins family. NUBP2/CFD1 subfamily. Heterotetramer of 2 NBP35 and 2 CFD1 chains. [4Fe-4S] cluster is required as a cofactor.

It localises to the cytoplasm. Its function is as follows. Component of the cytosolic iron-sulfur (Fe/S) protein assembly (CIA) machinery. Required for maturation of extramitochondrial Fe-S proteins. The NBP35-CFD1 heterotetramer forms a Fe-S scaffold complex, mediating the de novo assembly of an Fe-S cluster and its transfer to target apoproteins. Required for biogenesis and export of both ribosomal subunits, which may reflect a role in assembly of the Fe/S clusters in RLI1, a protein which performs rRNA processing and ribosome export. This is Cytosolic Fe-S cluster assembly factor CFD1 from Kluyveromyces lactis (strain ATCC 8585 / CBS 2359 / DSM 70799 / NBRC 1267 / NRRL Y-1140 / WM37) (Yeast).